The sequence spans 389 residues: Phospho-N-acetylmuramoyl-pentapeptide-transferase (389 aa).

10 helical membrane passes run 21–41, 70–90, 97–117, 134–154, 189–209, 222–242, 259–279, 286–306, 311–331, and 366–386; these read FITF…LVTG, GTPT…TLLW, FIWV…VDDY, YMWQ…SVSA, TISY…VIVG, GLAI…AYLT, AGEL…FLWF, VFMG…IAVI, VVLF…MLQV, and QVVV…LSTL.

This sequence belongs to the glycosyltransferase 4 family. MraY subfamily. Mg(2+) serves as cofactor.

The protein resides in the cell inner membrane. The enzyme catalyses UDP-N-acetyl-alpha-D-muramoyl-L-alanyl-gamma-D-glutamyl-meso-2,6-diaminopimeloyl-D-alanyl-D-alanine + di-trans,octa-cis-undecaprenyl phosphate = di-trans,octa-cis-undecaprenyl diphospho-N-acetyl-alpha-D-muramoyl-L-alanyl-D-glutamyl-meso-2,6-diaminopimeloyl-D-alanyl-D-alanine + UMP. It functions in the pathway cell wall biogenesis; peptidoglycan biosynthesis. Catalyzes the initial step of the lipid cycle reactions in the biosynthesis of the cell wall peptidoglycan: transfers peptidoglycan precursor phospho-MurNAc-pentapeptide from UDP-MurNAc-pentapeptide onto the lipid carrier undecaprenyl phosphate, yielding undecaprenyl-pyrophosphoryl-MurNAc-pentapeptide, known as lipid I. This chain is Phospho-N-acetylmuramoyl-pentapeptide-transferase, found in Janthinobacterium sp. (strain Marseille) (Minibacterium massiliensis).